The following is a 118-amino-acid chain: Ribonuclease P protein component (118 aa).

Belongs to the RnpA family. Consists of a catalytic RNA component (M1 or rnpB) and a protein subunit.

It carries out the reaction Endonucleolytic cleavage of RNA, removing 5'-extranucleotides from tRNA precursor.. In terms of biological role, RNaseP catalyzes the removal of the 5'-leader sequence from pre-tRNA to produce the mature 5'-terminus. It can also cleave other RNA substrates such as 4.5S RNA. The protein component plays an auxiliary but essential role in vivo by binding to the 5'-leader sequence and broadening the substrate specificity of the ribozyme. The chain is Ribonuclease P protein component from Levilactobacillus brevis (strain ATCC 367 / BCRC 12310 / CIP 105137 / JCM 1170 / LMG 11437 / NCIMB 947 / NCTC 947) (Lactobacillus brevis).